A 413-amino-acid chain; its full sequence is Arginine biosynthesis bifunctional protein ArgJ (413 aa).

Positions 158, 184, 195, 285, 408, and 413 each coordinate substrate. The active-site Nucleophile is T195.

It belongs to the ArgJ family. In terms of assembly, heterotetramer of two alpha and two beta chains.

The protein localises to the cytoplasm. The enzyme catalyses N(2)-acetyl-L-ornithine + L-glutamate = N-acetyl-L-glutamate + L-ornithine. The catalysed reaction is L-glutamate + acetyl-CoA = N-acetyl-L-glutamate + CoA + H(+). It participates in amino-acid biosynthesis; L-arginine biosynthesis; L-ornithine and N-acetyl-L-glutamate from L-glutamate and N(2)-acetyl-L-ornithine (cyclic): step 1/1. The protein operates within amino-acid biosynthesis; L-arginine biosynthesis; N(2)-acetyl-L-ornithine from L-glutamate: step 1/4. Its function is as follows. Catalyzes two activities which are involved in the cyclic version of arginine biosynthesis: the synthesis of N-acetylglutamate from glutamate and acetyl-CoA as the acetyl donor, and of ornithine by transacetylation between N(2)-acetylornithine and glutamate. The polypeptide is Arginine biosynthesis bifunctional protein ArgJ (Bradyrhizobium diazoefficiens (strain JCM 10833 / BCRC 13528 / IAM 13628 / NBRC 14792 / USDA 110)).